Consider the following 585-residue polypeptide: Arginine--tRNA ligase (585 aa).

The 'HIGH' region signature appears at 131 to 141 (ANPTGPMHVGH).

Belongs to the class-I aminoacyl-tRNA synthetase family. In terms of assembly, monomer.

Its subcellular location is the cytoplasm. The enzyme catalyses tRNA(Arg) + L-arginine + ATP = L-arginyl-tRNA(Arg) + AMP + diphosphate. In Brucella suis (strain ATCC 23445 / NCTC 10510), this protein is Arginine--tRNA ligase.